A 174-amino-acid polypeptide reads, in one-letter code: ATP-dependent protease subunit HslV (174 aa).

Residue threonine 2 is part of the active site. Glycine 157, cysteine 160, and threonine 163 together coordinate Na(+).

This sequence belongs to the peptidase T1B family. HslV subfamily. In terms of assembly, a double ring-shaped homohexamer of HslV is capped on each side by a ring-shaped HslU homohexamer. The assembly of the HslU/HslV complex is dependent on binding of ATP.

The protein localises to the cytoplasm. The enzyme catalyses ATP-dependent cleavage of peptide bonds with broad specificity.. Its activity is regulated as follows. Allosterically activated by HslU binding. Functionally, protease subunit of a proteasome-like degradation complex believed to be a general protein degrading machinery. The chain is ATP-dependent protease subunit HslV from Shewanella frigidimarina (strain NCIMB 400).